The following is a 435-amino-acid chain: Histidine--tRNA ligase (435 aa).

A disordered region spans residues 415 to 435; sequence SVPLSAFPGDYDRPTFEDFAE. The span at 424-435 shows a compositional bias: basic and acidic residues; it reads DYDRPTFEDFAE.

Belongs to the class-II aminoacyl-tRNA synthetase family.

It is found in the cytoplasm. It catalyses the reaction tRNA(His) + L-histidine + ATP = L-histidyl-tRNA(His) + AMP + diphosphate + H(+). In Haloarcula marismortui (strain ATCC 43049 / DSM 3752 / JCM 8966 / VKM B-1809) (Halobacterium marismortui), this protein is Histidine--tRNA ligase.